Reading from the N-terminus, the 248-residue chain is 5'-nucleotidase SurE (248 aa).

Residues Asp8, Asp9, Ser39, and Asn91 each contribute to the a divalent metal cation site.

The protein belongs to the SurE nucleotidase family. The cofactor is a divalent metal cation.

It localises to the cytoplasm. The catalysed reaction is a ribonucleoside 5'-phosphate + H2O = a ribonucleoside + phosphate. Nucleotidase that shows phosphatase activity on nucleoside 5'-monophosphates. The sequence is that of 5'-nucleotidase SurE from Neisseria meningitidis serogroup A / serotype 4A (strain DSM 15465 / Z2491).